Reading from the N-terminus, the 98-residue chain is Large ribosomal subunit protein eL30 (98 aa).

This sequence belongs to the eukaryotic ribosomal protein eL30 family.

This Methanothermobacter thermautotrophicus (strain ATCC 29096 / DSM 1053 / JCM 10044 / NBRC 100330 / Delta H) (Methanobacterium thermoautotrophicum) protein is Large ribosomal subunit protein eL30 (rpl30e).